The primary structure comprises 266 residues: UPF0354 protein LMHCC_0955 (266 aa).

It belongs to the UPF0354 family.

In Listeria monocytogenes serotype 4a (strain HCC23), this protein is UPF0354 protein LMHCC_0955.